The primary structure comprises 460 residues: MNTSAPPAVSPNITVLAPGKGPWQVAFIGITTGLLSLATVTGNLLVLISFKVNTELKTVNNYFLLSLACADLIIGTFSMNLYTTYLLMGHWALGTLACDLWLALDYVASNASVMNLLLISFDRYFSVTRPLSYRAKRTPRRAALMIGLAWLVSFVLWAPAILFWQYLVGERTVLAGQCYIQFLSQPIITFGTAMAAFYLPVTVMCTLYWRIYRETESRARELAALQGSETPGKGGGSSSSSERSQPGAEGSPGTPPGRCCRCCRAPRLLQAYSWKEEEEEDEGSMESLTSSEGEEPGSEVVIKMPMVDPEAQAPTKQPPRSSPNTVKRPTKKGRDRAGKGQKPRGKEQLAKRKTFSLVKEKKAARTLSAILLAFILTWTPYNIMVLVSTFCKDCVPETLWELGYWLCYVNSTINPMCYALCNKAFRDTFRLLLLCRWDKRRWRKIPKRPGSVHRTPSRQC.

At 1 to 22 the chain is on the extracellular side; the sequence is MNTSAPPAVSPNITVLAPGKGP. N2 and N12 each carry an N-linked (GlcNAc...) asparagine glycan. The chain crosses the membrane as a helical span at residues 23 to 48; the sequence is WQVAFIGITTGLLSLATVTGNLLVLI. The Cytoplasmic segment spans residues 49–62; it reads SFKVNTELKTVNNY. Residues 63–84 traverse the membrane as a helical segment; it reads FLLSLACADLIIGTFSMNLYTT. Residues 85–95 are Extracellular-facing; the sequence is YLLMGHWALGT. The helical transmembrane segment at 96 to 121 threads the bilayer; sequence LACDLWLALDYVASNASVMNLLLISF. C98 and C178 form a disulfide bridge. Residues 122–142 are Cytoplasmic-facing; that stretch reads DRYFSVTRPLSYRAKRTPRRA. The helical transmembrane segment at 143-164 threads the bilayer; the sequence is ALMIGLAWLVSFVLWAPAILFW. The Extracellular segment spans residues 165–185; it reads QYLVGERTVLAGQCYIQFLSQ. A helical membrane pass occupies residues 186-209; the sequence is PIITFGTAMAAFYLPVTVMCTLYW. Residues 210-366 lie on the Cytoplasmic side of the membrane; the sequence is RIYRETESRA…LVKEKKAART (157 aa). Disordered regions lie at residues 225-256, 274-297, and 310-351; these read LQGSETPGKGGGSSSSSERSQPGAEGSPGTPP, WKEEEEEDEGSMESLTSSEGEEPG, and EAQA…QLAK. Position 230 is a phosphothreonine (T230). A compositionally biased stretch (low complexity) spans 238 to 247; it reads SSSSERSQPG. Positions 328-343 are enriched in basic residues; the sequence is RPTKKGRDRAGKGQKP. A helical membrane pass occupies residues 367–390; that stretch reads LSAILLAFILTWTPYNIMVLVSTF. At 391 to 397 the chain is on the extracellular side; it reads CKDCVPE. A helical transmembrane segment spans residues 398 to 420; sequence TLWELGYWLCYVNSTINPMCYAL. Residues 421-460 lie on the Cytoplasmic side of the membrane; the sequence is CNKAFRDTFRLLLLCRWDKRRWRKIPKRPGSVHRTPSRQC. T428 bears the Phosphothreonine mark. Phosphoserine is present on S451. T455 bears the Phosphothreonine mark. S457 carries the phosphoserine modification.

This sequence belongs to the G-protein coupled receptor 1 family. Muscarinic acetylcholine receptor subfamily. CHRM1 sub-subfamily. Interacts with GPRASP2. Interacts with TMEM147.

The protein resides in the cell membrane. It localises to the postsynaptic cell membrane. The muscarinic acetylcholine receptor mediates various cellular responses, including inhibition of adenylate cyclase, breakdown of phosphoinositides and modulation of potassium channels through the action of G proteins. Primary transducing effect is Pi turnover. The chain is Muscarinic acetylcholine receptor M1 (CHRM1) from Pongo abelii (Sumatran orangutan).